Reading from the N-terminus, the 200-residue chain is Potassium-transporting ATPase KdpC subunit (200 aa).

The chain crosses the membrane as a helical span at residues Pro6–Thr26.

This sequence belongs to the KdpC family. In terms of assembly, the system is composed of three essential subunits: KdpA, KdpB and KdpC.

The protein localises to the cell inner membrane. In terms of biological role, part of the high-affinity ATP-driven potassium transport (or Kdp) system, which catalyzes the hydrolysis of ATP coupled with the electrogenic transport of potassium into the cytoplasm. This subunit acts as a catalytic chaperone that increases the ATP-binding affinity of the ATP-hydrolyzing subunit KdpB by the formation of a transient KdpB/KdpC/ATP ternary complex. In Yersinia enterocolitica serotype O:8 / biotype 1B (strain NCTC 13174 / 8081), this protein is Potassium-transporting ATPase KdpC subunit.